The chain runs to 1178 residues: Pyruvate carboxylase, mitochondrial (1178 aa).

Residues Met1–Ser20 constitute a mitochondrion transit peptide. Lys35 and Lys39 each carry N6-acetyllysine. The region spanning Pro36 to Glu486 is the Biotin carboxylation domain. An N6-acetyllysine; alternate modification is found at Lys79. Lys79 is modified (N6-succinyllysine; alternate). Residues Lys148 and Lys152 each carry the N6-acetyllysine modification. 2 residues coordinate ATP: Lys152 and Glu236. Residues Arg156 to Glu353 form the ATP-grasp domain. Lys241 is subject to N6-acetyllysine. Position 271 (His271) interacts with ATP. N6-acetyllysine occurs at positions 297, 316, and 319. Arg328 is a catalytic residue. N6-acetyllysine is present on Lys434. Lys442 carries the post-translational modification N6-succinyllysine. The region spanning Leu563 to Phe832 is the Pyruvate carboxyltransferase domain. Arg571–Gln575 serves as a coordination point for substrate. Asp572 is a binding site for Mn(2+). Lys589 is subject to N6-acetyllysine. Arg644 lines the substrate pocket. N6-acetyllysine is present on residues Lys661 and Lys717. Residue Lys741 coordinates Mn(2+). Lys741 bears the N6-carboxylysine mark. An N6-acetyllysine modification is found at Lys748. Positions 771 and 773 each coordinate Mn(2+). Lys892 carries the post-translational modification N6-acetyllysine. Thr908 provides a ligand contact to substrate. Lys969 carries the post-translational modification N6-acetyllysine. An N6-acetyllysine; alternate modification is found at Lys988. Lys988 is modified (N6-succinyllysine; alternate). Lys992 bears the N6-acetyllysine mark. Position 1003 is a phosphothreonine (Thr1003). An N6-acetyllysine mark is found at Lys1061, Lys1090, and Lys1124. A Biotinyl-binding domain is found at Lys1109–Glu1178. At Lys1144 the chain carries N6-biotinyllysine.

As to quaternary structure, homotetramer. Interacts (via the biotin carboxylation domain) with SIRT4. Biotin serves as cofactor. Mn(2+) is required as a cofactor. Acetylation of Lys-748 might play a role in catalytic activity regulation.

Its subcellular location is the mitochondrion matrix. The enzyme catalyses hydrogencarbonate + pyruvate + ATP = oxaloacetate + ADP + phosphate + H(+). The protein operates within carbohydrate biosynthesis; gluconeogenesis. Pyruvate carboxylase catalyzes a 2-step reaction, involving the ATP-dependent carboxylation of the covalently attached biotin in the first step and the transfer of the carboxyl group to pyruvate in the second. Catalyzes in a tissue specific manner, the initial reactions of glucose (liver, kidney) and lipid (adipose tissue, liver, brain) synthesis from pyruvate. This is Pyruvate carboxylase, mitochondrial (Pc) from Rattus norvegicus (Rat).